The sequence spans 925 residues: Translation initiation factor IF-2 (925 aa).

Disordered stretches follow at residues 52-84 and 98-326; these read GGGKAAEGAAKAPAKAAAKGDAKTAAKGDVKAP and AGGN…GVRL. A compositionally biased stretch (low complexity) spans 57-68; it reads AEGAAKAPAKAA. A compositionally biased stretch (basic and acidic residues) spans 69–84; it reads AKGDAKTAAKGDVKAP. A compositionally biased stretch (low complexity) spans 98 to 138; sequence AGGNGEAAAPPAQPGGTATTPAAQATPEAPARPGPAAARPS. Composition is skewed to pro residues over residues 139–169 and 193–207; these read APAPGQPKPPAPGQPPRPGATPGPRPGPAPK and PRPVPRPGAPRPGAP. A compositionally biased stretch (gly residues) spans 236 to 296; the sequence is RPGGGRPGGP…GAAGAFGRPG (61 aa). Basic residues predominate over residues 300–309; that stretch reads RRGRKSKRQK. Residues 421-592 enclose the tr-type G domain; sequence TRPPVVTVMG…AVLLTADAAL (172 aa). The segment at 430–437 is G1; it reads GHVDHGKT. Position 430–437 (430–437) interacts with GTP; the sequence is GHVDHGKT. Residues 455–459 form a G2 region; the sequence is GITQH. The segment at 480–483 is G3; that stretch reads DTPG. GTP-binding positions include 480–484 and 534–537; these read DTPGH and NKID. A G4 region spans residues 534 to 537; the sequence is NKID. The interval 570-572 is G5; the sequence is SAK.

It belongs to the TRAFAC class translation factor GTPase superfamily. Classic translation factor GTPase family. IF-2 subfamily.

It is found in the cytoplasm. In terms of biological role, one of the essential components for the initiation of protein synthesis. Protects formylmethionyl-tRNA from spontaneous hydrolysis and promotes its binding to the 30S ribosomal subunits. Also involved in the hydrolysis of GTP during the formation of the 70S ribosomal complex. The polypeptide is Translation initiation factor IF-2 (Mycolicibacterium paratuberculosis (strain ATCC BAA-968 / K-10) (Mycobacterium paratuberculosis)).